Consider the following 78-residue polypeptide: MSKFSLLDHELIPHHEIMDEDDLKTVLTHYNVEREQLPKLKVTDPIALEIGAEPGDVVKVIRKSQTAGEALYYRYVIG.

Belongs to the archaeal Rpo5/eukaryotic RPB5 RNA polymerase subunit family. In terms of assembly, part of the RNA polymerase complex.

It localises to the cytoplasm. The enzyme catalyses RNA(n) + a ribonucleoside 5'-triphosphate = RNA(n+1) + diphosphate. In terms of biological role, DNA-dependent RNA polymerase (RNAP) catalyzes the transcription of DNA into RNA using the four ribonucleoside triphosphates as substrates. The protein is DNA-directed RNA polymerase subunit Rpo5 of Methanococcoides burtonii (strain DSM 6242 / NBRC 107633 / OCM 468 / ACE-M).